The following is a 130-amino-acid chain: Ribonuclease pancreatic (130 aa).

Residues 1-6 (VQPSLG) form the signal peptide. Positions 13 and 16 each coordinate substrate. His-18 serves as the catalytic Proton acceptor. Intrachain disulfides connect Cys-32/Cys-90, Cys-46/Cys-101, Cys-64/Cys-116, and Cys-71/Cys-78. N-linked (GlcNAc...) asparagine glycosylation is present at Asn-40. Substrate contacts are provided by residues 47-51 (KPVNT), Lys-72, and Arg-91. His-125 (proton donor) is an active-site residue.

This sequence belongs to the pancreatic ribonuclease family. Monomer. Interacts with and forms tight 1:1 complexes with RNH1. Dimerization of two such complexes may occur. Interaction with RNH1 inhibits this protein. As to expression, pancreas.

The protein localises to the secreted. It catalyses the reaction an [RNA] containing cytidine + H2O = an [RNA]-3'-cytidine-3'-phosphate + a 5'-hydroxy-ribonucleotide-3'-[RNA].. The enzyme catalyses an [RNA] containing uridine + H2O = an [RNA]-3'-uridine-3'-phosphate + a 5'-hydroxy-ribonucleotide-3'-[RNA].. Endonuclease that catalyzes the cleavage of RNA on the 3' side of pyrimidine nucleotides. Acts on single-stranded and double-stranded RNA. The chain is Ribonuclease pancreatic (RNASE1) from Cricetulus griseus (Chinese hamster).